We begin with the raw amino-acid sequence, 401 residues long: uncharacterized protein (401 aa).

10 consecutive transmembrane segments (helical) span residues 20 to 40, 49 to 69, 83 to 100, 104 to 121, 140 to 160, 167 to 187, 207 to 227, 248 to 268, 289 to 309, and 357 to 377; these read FFGE…MVLY, IMMP…LTLA, ILTA…FVFA, YVFA…SLYI, VFAV…LVGM, PVWI…IAAL, FTIY…SMLY, MLTI…VPLV, LAAA…TAAV, and GLIL…VCLL.

It belongs to the major facilitator superfamily.

The protein resides in the cell membrane. This is an uncharacterized protein from Bacillus subtilis (strain 168).